Consider the following 394-residue polypeptide: 1-deoxy-D-xylulose 5-phosphate reductoisomerase (394 aa).

Residues T14, G15, S16, I17, G40, N43, and N130 each contribute to the NADPH site. 1-deoxy-D-xylulose 5-phosphate is bound at residue K131. E132 contacts NADPH. D154 lines the Mn(2+) pocket. 1-deoxy-D-xylulose 5-phosphate is bound by residues S155, E156, S180, and H203. Position 156 (E156) interacts with Mn(2+). G209 is an NADPH binding site. Residues S216, N221, K222, and E225 each coordinate 1-deoxy-D-xylulose 5-phosphate. E225 is a binding site for Mn(2+).

It belongs to the DXR family. It depends on Mg(2+) as a cofactor. Mn(2+) is required as a cofactor.

It carries out the reaction 2-C-methyl-D-erythritol 4-phosphate + NADP(+) = 1-deoxy-D-xylulose 5-phosphate + NADPH + H(+). It functions in the pathway isoprenoid biosynthesis; isopentenyl diphosphate biosynthesis via DXP pathway; isopentenyl diphosphate from 1-deoxy-D-xylulose 5-phosphate: step 1/6. Its function is as follows. Catalyzes the NADPH-dependent rearrangement and reduction of 1-deoxy-D-xylulose-5-phosphate (DXP) to 2-C-methyl-D-erythritol 4-phosphate (MEP). The protein is 1-deoxy-D-xylulose 5-phosphate reductoisomerase of Corynebacterium efficiens (strain DSM 44549 / YS-314 / AJ 12310 / JCM 11189 / NBRC 100395).